We begin with the raw amino-acid sequence, 341 residues long: Annexin A1 isoform p35 (341 aa).

4 Annexin repeats span residues 37–108, 109–180, 192–263, and 267–338; these read FDPS…ALLK, TPAQ…SLAK, ELAE…ALVK, and SKPA…ALCG.

The protein belongs to the annexin family. In terms of processing, in contrast to mammalian homologs, does not contain a tyrosine phosphorylation site in the N-terminal part.

The protein resides in the nucleus. It is found in the cytoplasm. It localises to the cell projection. Its subcellular location is the cilium. The protein localises to the basolateral cell membrane. Functionally, calcium/phospholipid-binding protein which promotes membrane fusion and is involved in exocytosis. This protein regulates phospholipase A2 activity. It seems to bind from two to four calcium ions with high affinity. The chain is Annexin A1 isoform p35 (CP35) from Columba livia (Rock dove).